Reading from the N-terminus, the 1019-residue chain is Phosphatidylinositol 3,4,5-trisphosphate 5-phosphatase 1 (1019 aa).

One can recognise an SH2 domain in the interval 5 to 101; the sequence is WYHGNITRSK…GLVTHLQYPI (97 aa). Positions 103–116 are enriched in acidic residues; the sequence is KEEEGPEEPDEEQE. 2 disordered regions span residues 103 to 133 and 909 to 1019; these read KEEE…TPPS and ETQN…PPTA. The SH3-binding 1 signature appears at 120 to 125; that stretch reads PNVPPR. 2 stretches are compositionally biased toward polar residues: residues 909–931 and 958–980; these read ETQN…KQSP and PITS…TNRT. The short motif at 966-971 is the SH3-binding 2 element; sequence TLSTQK. The NPXY motif signature appears at 1004–1007; that stretch reads NPLY. A Phosphotyrosine modification is found at Tyr1007. The span at 1010-1019 shows a compositional bias: polar residues; it reads VNNTLYPPTA.

It belongs to the inositol 1,4,5-trisphosphate 5-phosphatase family. Post-translationally, tyrosine phosphorylated by the members of the SRC family after exposure to a diverse array of extracellular stimuli.

It localises to the cytoplasm. It is found in the cell membrane. The protein resides in the membrane raft. Its subcellular location is the cytoskeleton. It catalyses the reaction a 1,2-diacyl-sn-glycero-3-phospho-(1D-myo-inositol-3,4,5-trisphosphate) + H2O = a 1,2-diacyl-sn-glycero-3-phospho-(1D-myo-inositol-3,4-bisphosphate) + phosphate. The catalysed reaction is 1D-myo-inositol 1,3,4,5-tetrakisphosphate + H2O = 1D-myo-inositol 1,3,4-trisphosphate + phosphate. The enzyme catalyses a 1,2-diacyl-sn-glycero-3-phospho-(1D-myo-inositol-4,5-bisphosphate) + H2O = a 1,2-diacyl-sn-glycero-3-phospho-(1D-myo-inositol 4-phosphate) + phosphate. Its function is as follows. Phosphatidylinositol (PtdIns) phosphatase that specifically hydrolyzes the 5-phosphate of phosphatidylinositol-3,4,5-trisphosphate (PtdIns(3,4,5)P3) to produce PtdIns(3,4)P2, thereby negatively regulating the PI3K (phosphoinositide 3-kinase) pathways. Able also to hydrolyzes the 5-phosphate of phosphatidylinositol-4,5-bisphosphate (PtdIns(4,5)P3) and inositol 1,3,4,5-tetrakisphosphate. Acts as a negative regulator of B-cell antigen receptor signaling. Mediates signaling from the FC-gamma-RIIB receptor (FCGR2B), playing a central role in terminating signal transduction from activating immune/hematopoietic cell receptor systems. Acts as a negative regulator of myeloid cell proliferation/survival and chemotaxis, mast cell degranulation, immune cells homeostasis, integrin alpha-IIb/beta-3 signaling in platelets and JNK signaling in B-cells. The polypeptide is Phosphatidylinositol 3,4,5-trisphosphate 5-phosphatase 1 (inpp5d) (Xenopus laevis (African clawed frog)).